We begin with the raw amino-acid sequence, 395 residues long: Zinc-regulated GTPase metalloprotein activator 1B (395 aa).

A disordered region spans residues 1–36; it reads MLPAVGSADEEEDPAEEDCPELVPMETTQSEEEEKS. Over residues 8–20 the composition is skewed to acidic residues; it reads ADEEEDPAEEDCP. The short motif at 17–24 is the psi-PxLVp motif element; the sequence is EDCPELVP. Residue 49–56 coordinates GTP; the sequence is GYLGAGKT. C107, C109, and C110 together coordinate Zn(2+). Residues 107 to 110 carry the CXCC motif motif; it reads CLCC. GTP is bound by residues 110-114 and 203-206; these read CSVKD and NKTD. Residues 274–377 enclose the CobW C-terminal domain; sequence IVTITFEVPG…ILKQLFIATV (104 aa).

It belongs to the SIMIBI class G3E GTPase family. ZNG1 subfamily.

The protein resides in the nucleus. The catalysed reaction is GTP + H2O = GDP + phosphate + H(+). Zinc chaperone that directly transfers zinc cofactor to target metalloproteins, thereby activating them. Catalyzes zinc insertion into the active site of methionine aminopeptidase METAP1, which function to cleave the initiator methionine from polypeptides during or after protein translation. Mechanistically, the N-terminal psi-PxLVp motif binds to the C6H2-type zinc finger of inactive form of METAP1. After formation of the docked complex, zinc is transferred from the CXCC motif in the GTPase domain of ZNG1B to the zinc binding site in the peptidase domain of METAP1 in a process requiring GTP hydrolysis. GTP/GDP exchange is required for release of active METAP1. The polypeptide is Zinc-regulated GTPase metalloprotein activator 1B (Homo sapiens (Human)).